Here is a 198-residue protein sequence, read N- to C-terminus: dTTP/UTP pyrophosphatase (198 aa).

Residue Asp78 is the Proton acceptor of the active site.

The protein belongs to the Maf family. YhdE subfamily. A divalent metal cation serves as cofactor.

The protein localises to the cytoplasm. The catalysed reaction is dTTP + H2O = dTMP + diphosphate + H(+). It catalyses the reaction UTP + H2O = UMP + diphosphate + H(+). Its function is as follows. Nucleoside triphosphate pyrophosphatase that hydrolyzes dTTP and UTP. May have a dual role in cell division arrest and in preventing the incorporation of modified nucleotides into cellular nucleic acids. The chain is dTTP/UTP pyrophosphatase from Chromobacterium violaceum (strain ATCC 12472 / DSM 30191 / JCM 1249 / CCUG 213 / NBRC 12614 / NCIMB 9131 / NCTC 9757 / MK).